The primary structure comprises 207 residues: Thiamine-phosphate synthase (207 aa).

4-amino-2-methyl-5-(diphosphooxymethyl)pyrimidine is bound by residues 38–42 (QYRAK) and Asn-70. Positions 71 and 90 each coordinate Mg(2+). Residue Thr-109 participates in 4-amino-2-methyl-5-(diphosphooxymethyl)pyrimidine binding. 135–137 (TNS) contacts 2-[(2R,5Z)-2-carboxy-4-methylthiazol-5(2H)-ylidene]ethyl phosphate. 4-amino-2-methyl-5-(diphosphooxymethyl)pyrimidine is bound at residue Lys-138. 2-[(2R,5Z)-2-carboxy-4-methylthiazol-5(2H)-ylidene]ethyl phosphate-binding positions include Gly-165 and 185 to 186 (IS).

This sequence belongs to the thiamine-phosphate synthase family. It depends on Mg(2+) as a cofactor.

It catalyses the reaction 2-[(2R,5Z)-2-carboxy-4-methylthiazol-5(2H)-ylidene]ethyl phosphate + 4-amino-2-methyl-5-(diphosphooxymethyl)pyrimidine + 2 H(+) = thiamine phosphate + CO2 + diphosphate. The catalysed reaction is 2-(2-carboxy-4-methylthiazol-5-yl)ethyl phosphate + 4-amino-2-methyl-5-(diphosphooxymethyl)pyrimidine + 2 H(+) = thiamine phosphate + CO2 + diphosphate. It carries out the reaction 4-methyl-5-(2-phosphooxyethyl)-thiazole + 4-amino-2-methyl-5-(diphosphooxymethyl)pyrimidine + H(+) = thiamine phosphate + diphosphate. The protein operates within cofactor biosynthesis; thiamine diphosphate biosynthesis; thiamine phosphate from 4-amino-2-methyl-5-diphosphomethylpyrimidine and 4-methyl-5-(2-phosphoethyl)-thiazole: step 1/1. Functionally, condenses 4-methyl-5-(beta-hydroxyethyl)thiazole monophosphate (THZ-P) and 2-methyl-4-amino-5-hydroxymethyl pyrimidine pyrophosphate (HMP-PP) to form thiamine monophosphate (TMP). This chain is Thiamine-phosphate synthase, found in Clostridium perfringens (strain 13 / Type A).